The chain runs to 693 residues: Homoaconitase, mitochondrial (693 aa).

The N-terminal 17 residues, 1-17, are a transit peptide targeting the mitochondrion; that stretch reads MFRVQRLRMFSTSRALY. [4Fe-4S] cluster is bound by residues Cys-338, Cys-405, and Cys-408.

This sequence belongs to the aconitase/IPM isomerase family. The cofactor is [4Fe-4S] cluster.

It is found in the mitochondrion. The enzyme catalyses (2R,3S)-homoisocitrate = cis-homoaconitate + H2O. It participates in amino-acid biosynthesis; L-lysine biosynthesis via AAA pathway; L-alpha-aminoadipate from 2-oxoglutarate: step 3/5. Functionally, catalyzes the reversible hydration of cis-homoaconitate to (2R,3S)-homoisocitrate, a step in the alpha-aminoadipate pathway for lysine biosynthesis. The chain is Homoaconitase, mitochondrial (LYS4) from Kluyveromyces lactis (strain ATCC 8585 / CBS 2359 / DSM 70799 / NBRC 1267 / NRRL Y-1140 / WM37) (Yeast).